The chain runs to 460 residues: ATP synthase subunit beta (460 aa).

150 to 157 contributes to the ATP binding site; that stretch reads GGAGVGKT.

It belongs to the ATPase alpha/beta chains family. F-type ATPases have 2 components, CF(1) - the catalytic core - and CF(0) - the membrane proton channel. CF(1) has five subunits: alpha(3), beta(3), gamma(1), delta(1), epsilon(1). CF(0) has three main subunits: a(1), b(2) and c(9-12). The alpha and beta chains form an alternating ring which encloses part of the gamma chain. CF(1) is attached to CF(0) by a central stalk formed by the gamma and epsilon chains, while a peripheral stalk is formed by the delta and b chains.

It localises to the cell inner membrane. The enzyme catalyses ATP + H2O + 4 H(+)(in) = ADP + phosphate + 5 H(+)(out). Its function is as follows. Produces ATP from ADP in the presence of a proton gradient across the membrane. The catalytic sites are hosted primarily by the beta subunits. This chain is ATP synthase subunit beta, found in Salmonella gallinarum (strain 287/91 / NCTC 13346).